Consider the following 577-residue polypeptide: Galectin-3-binding protein (577 aa).

Residues 1 to 18 (MALLWLLSVFLLVPGTQG) form the signal peptide. An SRCR domain is found at 24–124 (MRLVNGASAN…HEKDAGVVCS (101 aa)). 3 disulfide bridges follow: cysteine 49/cysteine 113, cysteine 62/cysteine 123, and cysteine 93/cysteine 103. Residue asparagine 69 is glycosylated (N-linked (GlcNAc...) asparagine). N-linked (GlcNAc...) asparagine glycosylation is present at asparagine 125. Residues 153 to 221 (CDLFIQVTGQ…FYSRRIEVSM (69 aa)) enclose the BTB domain. Positions 260–360 (PLDLYAYARA…MLPQELFELQ (101 aa)) constitute a BACK domain. 4 N-linked (GlcNAc...) asparagine glycosylation sites follow: asparagine 362, asparagine 398, asparagine 543, and asparagine 572.

In terms of assembly, homodimers and homomultimers. The multimers form ring-like structures with a diameter of 30-40 nm. Binds LGALS1 and LGALS3. Binds ITGB1, COL4A1, COL5A1, COL6A1, FN1 and NID. Interacts with PPIC (in vitro). The unglycosylated form interacts with PDE4DIP isoform 2/MMG8/SMYLE; this interaction may connect a pericentrosomal complex to the gamma-tubulin ring complex (gamma-TuRC) to promote microtubule assembly and acetylation. In terms of processing, N-glycosylated. Detected in embryo, liver, spleen, kidney, lung, heart, intestine, thymus and lymph node.

The protein resides in the secreted. The protein localises to the extracellular space. It is found in the extracellular matrix. In terms of biological role, promotes integrin-mediated cell adhesion. May stimulate host defense against viruses and tumor cells. This Mus musculus (Mouse) protein is Galectin-3-binding protein (Lgals3bp).